The primary structure comprises 501 residues: Na(+)/H(+) antiporter NhaB (501 aa).

The next 11 helical transmembrane spans lie at 24–44 (VILLFLVINPIVMYLLGPGVA), 46–66 (WLLIGEFIFTLAMALKCYPLL), 90–110 (VLTNFPVILLLMFMVAGIYFM), 145–165 (FLDALTVTAVIISVAVGFFSV), 206–226 (LLMHGAIGTALGGVATMVGEP), 239–259 (FAGFFLHMAPVSIPVLFAGLA), 302–319 (ALWIQAVAAVILVFGLAF), 351–371 (FQESLPFTSLLVVFFAVVAVI), 395–415 (MFFIANGLLSMISDNVFVATV), 450–470 (VATPNGQAAFLFLLTSAIAPL), and 478–498 (MVIMALPYTIVMGGVGLYMVT).

It belongs to the NhaB Na(+)/H(+) (TC 2.A.34) antiporter family.

It is found in the cell inner membrane. The catalysed reaction is 2 Na(+)(in) + 3 H(+)(out) = 2 Na(+)(out) + 3 H(+)(in). Its function is as follows. Na(+)/H(+) antiporter that extrudes sodium in exchange for external protons. This is Na(+)/H(+) antiporter NhaB from Marinobacter nauticus (strain ATCC 700491 / DSM 11845 / VT8) (Marinobacter aquaeolei).